Reading from the N-terminus, the 196-residue chain is Protein TEX261 (196 aa).

The next 5 helical transmembrane spans lie at 3–23 (FMYV…TLAV), 42–62 (SRII…LYVF), 70–90 (IGVG…FPFI), 97–117 (FILS…FFAE), and 125–145 (VLAY…VSLS).

This sequence belongs to the SVP26 family. In terms of tissue distribution, detected in testis.

It is found in the membrane. The polypeptide is Protein TEX261 (Tex261) (Mus musculus (Mouse)).